The sequence spans 264 residues: Short chain dehydrogenase CPUR_05429 (264 aa).

4 residues coordinate NADP(+): Ile24, Asp70, Asn97, and Arg130. Catalysis depends on proton donor residues Ser146 and Ser147. NADP(+) is bound by residues Tyr161, Lys165, and Thr196. The active-site Proton acceptor is Tyr161. Residue Lys165 is the Lowers pKa of active site Tyr of the active site.

The protein belongs to the short-chain dehydrogenases/reductases (SDR) family.

It functions in the pathway pigment biosynthesis. Its function is as follows. Short chain dehydrogenase; part of the ergochrome gene cluster responsible for the typical purple-black color of the ergot sclerotia. The ergochrome gene cluster produces several ergot pigments including the yellow ergochrome secalonic acid and its derivatives, as well as the red anthraquinones endocrocin and clavorubin. The pathway begins with the synthesis of atrochrysone thioester by the polyketide synthase (PKS) CPUR_05437. The atrochrysone carboxyl ACP thioesterase CPUR_05436 then breaks the thioester bond and releases the atrochrysone carboxylic acid from CPUR_05437. The atrochrysone carboxylic acid is then converted to atrochrysone which is further transformed into emodin anthrone. The next step is performed by the anthrone oxygenase CPUR_05434 that catalyzes the oxidation of emodinanthrone to emodin. Emodin is further modified to yield monodictyphenone via several steps involving CPUR_05427, CPUR_05428, CPUR_05429 and CPUR_05430. The short chain dehydrogenase/reductase CPUR_05418 then catalyzes the C-5 ketoreduction to give the xanthone skeleton of the monomeric units. Ergochromes formation requires further dimerization steps of different xanthone units, probably catalyzed by the cytochrome P450 monooxygenase CPUR_05419. CPUR_05425, CPUR_05426 and CPUR_05431 are unique to Claviceps, thus it is likely that they are involved in further modification of xanthone units or in their dimerization. The yellow ergochromes and the red anthraquinone pigments endocrocin and clavorubin are products from the same PKS derived precursors and the latter are likely shunt products in the pathway of xanthone biosynthesis. It is proposed that atrochrysone carboxylic acid released from the PKS CPUR_05437 can also be converted to endocrocin anthrone which is further oxidized into endocrocin by CPUR_05435. Endocrocin could be then modified to clavorubin, possibly by CPUR_05423 and CPUR_05431. Clavorubin is the principal anthraquinone metabolite produced by the cluster with a much higher yield compared to endocrocin. The sequence is that of Short chain dehydrogenase CPUR_05429 from Claviceps purpurea (strain 20.1) (Ergot fungus).